The chain runs to 861 residues: MGEVTAEQVEKFLDSNIIFAKQYYNLRYRAKVISDMLGAKEAAVDFSNYHSLSSVEESEIIFDLLRDFQENLQAERCIFNVMKKLCFLLQADRMSLFMYRVRNGIAELATRLFNVHKDAVLEECLVAPDSEIVFPLDMGVVGHVAHSKKIANVVNTEEDEHFCDFVDTLTEYQTKNILASPIMNGKDVVAVIMAVNKVDEPHFTKRDEEILLKYLNFANLIMKVYHLSYLHNCETRRGQILLWSGSKVFEELTDIERQFHKALYTVRAFLNCDRYSVGLLDMTKQKEFFDVWPVLMGEAPPYSGPRTPDGREINFYKVIDYILHGKEDIKVIPNPPPDHWALVSGLPTYVAQNGLICNIMNAPAEDFFAFQKEPLDESGWMIKNVLSMPIVNKKEEIVGVATFYNRKDGKPFDEMDETLMESLAQFLGWSVLNPDTYESMNRLENRKDIFQDMVKYHVKCDNEEIQKILKTREVYGKEPWECEEEELAEILQGELPDAEKYEINKFHFSDLPLTELELVKCGIQMYYELKVVDKFHIPQEALVRFMYSLSKGYRRITYHNWRHGFNVGQTMFSLLVTGKLKRYFTDLEALAMVTAAFCHDIDHRGTNNLYQMKSQNPLAKLHGSSILERHHLEFGKTLLRDESLNIFQNLNRRQHEHAIHMMDIAIIATDLALYFKKRTMFQKIVDQSKTYETQQEWTQYMMLEQTRKEIVMAMMMTACDLSAITKPWEVQSKVALLVAAEFWEQGDLERTVLQQNPIPMMDRNKADELPKLQVGFIDFVCTFVYKEFSRFHEEITPMLDGITNNRKEWKALADEYDTKMKALEEEKQKQQTAKQGAAGDQPGGNPSPAGGAPASKSCCIQ.

Gly2 carries the N-acetylglycine modification. 2 consecutive GAF domains span residues 73–222 (QAER…NLIM) and 254–431 (DIER…GWSV). In terms of domain architecture, PDEase spans 483–816 (EEEELAEILQ…KEWKALADEY (334 aa)). His559 functions as the Proton donor in the catalytic mechanism. A divalent metal cation is bound by residues His563, His599, Asp600, and Asp720. The disordered stretch occupies residues 821 to 861 (KALEEEKQKQQTAKQGAAGDQPGGNPSPAGGAPASKSCCIQ). The segment covering 830-861 (QQTAKQGAAGDQPGGNPSPAGGAPASKSCCIQ) has biased composition (low complexity). Cys858 is subject to Cysteine methyl ester. The S-farnesyl cysteine moiety is linked to residue Cys858. The propeptide at 859–861 (CIQ) is removed in mature form.

This sequence belongs to the cyclic nucleotide phosphodiesterase family. In terms of assembly, oligomer composed of two catalytic chains (alpha and beta), an inhibitory chain (gamma) and the delta chain. It depends on a divalent metal cation as a cofactor.

It is found in the cell membrane. Its subcellular location is the cell projection. The protein resides in the cilium. The protein localises to the photoreceptor outer segment. It carries out the reaction 3',5'-cyclic GMP + H2O = GMP + H(+). Functionally, rod-specific cGMP phosphodiesterase that catalyzes the hydrolysis of 3',5'-cyclic GMP. This protein participates in processes of transmission and amplification of the visual signal. The protein is Rod cGMP-specific 3',5'-cyclic phosphodiesterase subunit alpha of Canis lupus familiaris (Dog).